A 218-amino-acid polypeptide reads, in one-letter code: Adenylate kinase (218 aa).

10 to 15 (GAGKGT) lines the ATP pocket. Residues 30 to 59 (STGDMFRAAMADQTDLGVKAKAFIDKGELV) form an NMP region. Residues T31, R36, 57–59 (ELV), 85–88 (GFPR), and Q92 contribute to the AMP site. Residues 126–164 (GRFICKTCGATYHKLYHPTQVEGTCDRCGGHVFFQREDD) are LID. R127 provides a ligand contact to ATP. Positions 130 and 133 each coordinate Zn(2+). 136–137 (TY) provides a ligand contact to ATP. 2 residues coordinate Zn(2+): C150 and C153. AMP contacts are provided by R161 and R172. Q200 provides a ligand contact to ATP.

Belongs to the adenylate kinase family. Monomer.

It is found in the cytoplasm. It catalyses the reaction AMP + ATP = 2 ADP. It participates in purine metabolism; AMP biosynthesis via salvage pathway; AMP from ADP: step 1/1. Its function is as follows. Catalyzes the reversible transfer of the terminal phosphate group between ATP and AMP. Plays an important role in cellular energy homeostasis and in adenine nucleotide metabolism. This is Adenylate kinase from Latilactobacillus sakei subsp. sakei (strain 23K) (Lactobacillus sakei subsp. sakei).